The chain runs to 429 residues: MIDPNLLRNNLEETAQKLKEKRNFILDVKQLRKLEEQRKALQVKTETLQAERNLRSKAIGAAKARGENIESLLNEVDHLGIELAQAKALFDDVSAELNTILLTIPNIPADEVPQGKDDTENQEVARWGTPRTFDFEVKDHVTLGENIDGLDFSAGVKLSGARFAVMKGRIAKLHRALAQFMLDLHTEKHGYLETYVPYLVNHTTLYGTGQLPKFGEDLFHTKALEGEQPYALIPTAEVPVTNLVRDEILSVENLPLKMTAHTPCFRSEAGSYGRDTRGLIRMHQFDKVEMVQIVEPEKSMEALEELTGHAEEVLRLLNLPYRKVLLCSGDMGFGACKTYDLEVWLPAQNTYREISSCSNMWDFQARRMQARCRAKGDKKTRLVHTLNGSGLAVGRTLVAVLENYQNADGSITVPEVLRPYMDNVDTIGR.

An L-serine-binding site is contributed by 235–237 (TAE). 266 to 268 (RSE) contacts ATP. Position 289 (Glu289) interacts with L-serine. Residue 353 to 356 (EISS) coordinates ATP. Ser389 contributes to the L-serine binding site.

Belongs to the class-II aminoacyl-tRNA synthetase family. Type-1 seryl-tRNA synthetase subfamily. In terms of assembly, homodimer. The tRNA molecule binds across the dimer.

It localises to the cytoplasm. It catalyses the reaction tRNA(Ser) + L-serine + ATP = L-seryl-tRNA(Ser) + AMP + diphosphate + H(+). It carries out the reaction tRNA(Sec) + L-serine + ATP = L-seryl-tRNA(Sec) + AMP + diphosphate + H(+). It functions in the pathway aminoacyl-tRNA biosynthesis; selenocysteinyl-tRNA(Sec) biosynthesis; L-seryl-tRNA(Sec) from L-serine and tRNA(Sec): step 1/1. Catalyzes the attachment of serine to tRNA(Ser). Is also able to aminoacylate tRNA(Sec) with serine, to form the misacylated tRNA L-seryl-tRNA(Sec), which will be further converted into selenocysteinyl-tRNA(Sec). This chain is Serine--tRNA ligase, found in Actinobacillus succinogenes (strain ATCC 55618 / DSM 22257 / CCUG 43843 / 130Z).